A 564-amino-acid polypeptide reads, in one-letter code: Probable diguanylate cyclase DgcQ (564 aa).

2 helical membrane passes run L20 to L40 and I360 to I380. The GGDEF domain maps to H428 to N563. Position 436 (D436) interacts with Mg(2+). Substrate-binding residues include N444, H449, and D453. E479 is a Mg(2+) binding site. E479 (proton acceptor) is an active-site residue.

As to quaternary structure, homodimer. Mg(2+) serves as cofactor.

Its subcellular location is the cell inner membrane. The catalysed reaction is 2 GTP = 3',3'-c-di-GMP + 2 diphosphate. Its pathway is glycan metabolism; bacterial cellulose biosynthesis. It participates in purine metabolism; 3',5'-cyclic di-GMP biosynthesis. Catalyzes the synthesis of cyclic-di-GMP (c-di-GMP) via the condensation of 2 GTP molecules. Cyclic-di-GMP is a second messenger which controls cell surface-associated traits in bacteria. Involved in the regulation of cellulose production. This Escherichia coli (strain K12) protein is Probable diguanylate cyclase DgcQ.